The sequence spans 952 residues: RNA polymerase-associated protein RapA (952 aa).

The 171-residue stretch at Glu-164 to Asp-334 folds into the Helicase ATP-binding domain. ATP is bound at residue Asp-177–Thr-184. Residues Asp-280–His-283 carry the DEAH box motif. A Helicase C-terminal domain is found at Arg-492 to Ile-668.

The protein belongs to the SNF2/RAD54 helicase family. RapA subfamily. Interacts with the RNAP. Has a higher affinity for the core RNAP than for the holoenzyme. Its ATPase activity is stimulated by binding to RNAP.

Functionally, transcription regulator that activates transcription by stimulating RNA polymerase (RNAP) recycling in case of stress conditions such as supercoiled DNA or high salt concentrations. Probably acts by releasing the RNAP, when it is trapped or immobilized on tightly supercoiled DNA. Does not activate transcription on linear DNA. Probably not involved in DNA repair. This Aliivibrio fischeri (strain ATCC 700601 / ES114) (Vibrio fischeri) protein is RNA polymerase-associated protein RapA.